The sequence spans 642 residues: Threonine--tRNA ligase (642 aa).

A TGS domain is found at 1-61 (MPIITLPDGS…EHDASLEIIT (61 aa)). The interval 244–535 (DHRKIGKQLD…LIEEYAGFFP (292 aa)) is catalytic. Positions 335, 386, and 512 each coordinate Zn(2+).

This sequence belongs to the class-II aminoacyl-tRNA synthetase family. As to quaternary structure, homodimer. The cofactor is Zn(2+).

The protein localises to the cytoplasm. It catalyses the reaction tRNA(Thr) + L-threonine + ATP = L-threonyl-tRNA(Thr) + AMP + diphosphate + H(+). Catalyzes the attachment of threonine to tRNA(Thr) in a two-step reaction: L-threonine is first activated by ATP to form Thr-AMP and then transferred to the acceptor end of tRNA(Thr). Also edits incorrectly charged L-seryl-tRNA(Thr). This Vibrio cholerae serotype O1 (strain M66-2) protein is Threonine--tRNA ligase.